The following is a 188-amino-acid chain: Elongation factor P 1 (188 aa).

It belongs to the elongation factor P family.

It is found in the cytoplasm. It participates in protein biosynthesis; polypeptide chain elongation. Functionally, involved in peptide bond synthesis. Stimulates efficient translation and peptide-bond synthesis on native or reconstituted 70S ribosomes in vitro. Probably functions indirectly by altering the affinity of the ribosome for aminoacyl-tRNA, thus increasing their reactivity as acceptors for peptidyl transferase. The chain is Elongation factor P 1 from Mesorhizobium japonicum (strain LMG 29417 / CECT 9101 / MAFF 303099) (Mesorhizobium loti (strain MAFF 303099)).